The primary structure comprises 508 residues: Glycogen synthase (508 aa).

Lys-27 is an ADP-alpha-D-glucose binding site.

It belongs to the glycosyltransferase 1 family. Bacterial/plant glycogen synthase subfamily.

It carries out the reaction [(1-&gt;4)-alpha-D-glucosyl](n) + ADP-alpha-D-glucose = [(1-&gt;4)-alpha-D-glucosyl](n+1) + ADP + H(+). It functions in the pathway glycan biosynthesis; glycogen biosynthesis. In terms of biological role, synthesizes alpha-1,4-glucan chains using ADP-glucose. The polypeptide is Glycogen synthase (Photobacterium profundum (strain SS9)).